Consider the following 416-residue polypeptide: Serine protease hepsin (416 aa).

The Cytoplasmic segment spans residues 1 to 18 (MAKEGGRTAPCCSRPKVA). Residues 19-39 (ALTVGTLLFLTGIGAASWAIV) form a helical; Signal-anchor for type II membrane protein membrane-spanning segment. At 40–416 (TILLRSDQEP…SEATGMVTQP (377 aa)) the chain is on the extracellular side. Residues 53–150 (VQLSPGDSRL…RGRFLTATCQ (98 aa)) form the SRCR domain. 8 cysteine pairs are disulfide-bonded: Cys76-Cys139, Cys89-Cys149, Cys118-Cys137, Cys152-Cys276, Cys187-Cys203, Cys290-Cys358, Cys321-Cys337, and Cys348-Cys380. N-linked (GlcNAc...) asparagine glycosylation occurs at Asn111. Residues 162 to 404 (IVGGQDSSLG…FREWIFQAIK (243 aa)) enclose the Peptidase S1 domain. Residues His202 and Asp256 each act as charge relay system in the active site. Residue Ser352 is the Charge relay system of the active site.

The protein belongs to the peptidase S1 family. As to expression, widely expressed. Present in brain, heart, kidney, liver, stomach, muscle, lung, testis, skin and eye. Not expressed in ovary and thynus. In inner ear tissues, expressed in stria vascularis, modiolus, organ of Corti and spiral ganglion.

Its subcellular location is the cell membrane. The protein localises to the apical cell membrane. It carries out the reaction Cleavage after basic amino-acid residues, with Arg strongly preferred to Lys.. Functionally, serine protease that cleaves extracellular substrates, and contributes to the proteolytic processing of growth factors, such as HGF and MST1/HGFL. Plays a role in cell growth and maintenance of cell morphology. Plays a role in the proteolytic processing of ACE2. Mediates the proteolytic cleavage of urinary UMOD that is required for UMOD polymerization. This Rattus norvegicus (Rat) protein is Serine protease hepsin (Hpn).